The chain runs to 85 residues: Putative membrane protein insertion efficiency factor (85 aa).

This sequence belongs to the UPF0161 family.

The protein resides in the cell membrane. Could be involved in insertion of integral membrane proteins into the membrane. The protein is Putative membrane protein insertion efficiency factor of Baumannia cicadellinicola subsp. Homalodisca coagulata.